A 211-amino-acid chain; its full sequence is Large ribosomal subunit protein eL13 (211 aa).

Lys-16 carries the post-translational modification N6-acetyllysine. Phosphoserine is present on residues Ser-52, Ser-77, and Ser-106. Glycyl lysine isopeptide (Lys-Gly) (interchain with G-Cter in SUMO2) cross-links involve residues Lys-123 and Lys-145. Lys-174 is covalently cross-linked (Glycyl lysine isopeptide (Lys-Gly) (interchain with G-Cter in SUMO1); alternate). Glycyl lysine isopeptide (Lys-Gly) (interchain with G-Cter in SUMO2); alternate cross-links involve residues Lys-174 and Lys-177. Lys-177 is modified (N6-acetyllysine; alternate).

Belongs to the eukaryotic ribosomal protein eL13 family. Component of the 60S large ribosomal subunit (LSU).

It localises to the cytoplasm. Component of the ribosome, a large ribonucleoprotein complex responsible for the synthesis of proteins in the cell. The small ribosomal subunit (SSU) binds messenger RNAs (mRNAs) and translates the encoded message by selecting cognate aminoacyl-transfer RNA (tRNA) molecules. The large subunit (LSU) contains the ribosomal catalytic site termed the peptidyl transferase center (PTC), which catalyzes the formation of peptide bonds, thereby polymerizing the amino acids delivered by tRNAs into a polypeptide chain. The nascent polypeptides leave the ribosome through a tunnel in the LSU and interact with protein factors that function in enzymatic processing, targeting, and the membrane insertion of nascent chains at the exit of the ribosomal tunnel. As part of the LSU, it is probably required for its formation and the maturation of rRNAs. Plays a role in bone development. The chain is Large ribosomal subunit protein eL13 (Rpl13) from Rattus norvegicus (Rat).